A 280-amino-acid polypeptide reads, in one-letter code: UPF0276 protein CC_3255 (280 aa).

This sequence belongs to the UPF0276 family.

The chain is UPF0276 protein CC_3255 from Caulobacter vibrioides (strain ATCC 19089 / CIP 103742 / CB 15) (Caulobacter crescentus).